A 191-amino-acid polypeptide reads, in one-letter code: Peptidyl-tRNA hydrolase (191 aa).

TRNA is bound at residue Tyr-14. The active-site Proton acceptor is the His-19. Residues Phe-64, Asn-66, and Asn-112 each coordinate tRNA.

It belongs to the PTH family. Monomer.

The protein resides in the cytoplasm. It catalyses the reaction an N-acyl-L-alpha-aminoacyl-tRNA + H2O = an N-acyl-L-amino acid + a tRNA + H(+). In terms of biological role, hydrolyzes ribosome-free peptidyl-tRNAs (with 1 or more amino acids incorporated), which drop off the ribosome during protein synthesis, or as a result of ribosome stalling. Functionally, catalyzes the release of premature peptidyl moieties from peptidyl-tRNA molecules trapped in stalled 50S ribosomal subunits, and thus maintains levels of free tRNAs and 50S ribosomes. The chain is Peptidyl-tRNA hydrolase from Novosphingobium aromaticivorans (strain ATCC 700278 / DSM 12444 / CCUG 56034 / CIP 105152 / NBRC 16084 / F199).